The following is a 331-amino-acid chain: GTP-binding protein RHO5 (331 aa).

10-17 (GDGAVGKT) lines the GTP pocket. Residues 51–76 (ASSPLELDNGNDKRGSLSSASSSPST) are disordered. Positions 66–75 (SLSSASSSPS) are enriched in low complexity. Residues 87-91 (DTAGQ) and 156-159 (TKSD) each bind GTP. 2 positions are modified to phosphoserine: serine 223 and serine 228. 2 positions are modified to phosphothreonine: threonine 232 and threonine 244. The interval 239–331 (TATTNTNGDK…KKKKSKCVIL (93 aa)) is disordered. Polar residues predominate over residues 258 to 273 (HHNNSTDSTLPKGSLQ). Lysine 276 is covalently cross-linked (Glycyl lysine isopeptide (Lys-Gly) (interchain with G-Cter in ubiquitin)). The segment covering 287 to 297 (GQKDKIHEQSK) has biased composition (basic and acidic residues). Over residues 308 to 331 (HHNKQAKPKTRNDKKKKKSKCVIL) the composition is skewed to basic residues. Cysteine 328 is subject to Cysteine methyl ester. Cysteine 328 carries the S-geranylgeranyl cysteine lipid modification. The propeptide at 329-331 (VIL) is removed in mature form.

It belongs to the small GTPase superfamily. Rho family. As to quaternary structure, interacts with RGD2.

Its subcellular location is the membrane. It localises to the mitochondrion. Functionally, small GTPase that negatively regulates a MAP kinase branch, downstream of SLT2, of the PKC1-mediated signal transduction pathway. With its specific guanine nucleotide exchange factor (GEF), the heterodimeric complex DCK1/LMO1, relocates to mitochondria upon oxidative stress and triggers cell death. The DCK1/LMO1/RHO5 signaling module that mediates mitochondrial turnover under nitrogen starvation conditions via mitophagy. The DCK1/LMO1/RHO5 signaling module also plays a role in cell wall integrity signaling. This Saccharomyces cerevisiae (strain ATCC 204508 / S288c) (Baker's yeast) protein is GTP-binding protein RHO5.